We begin with the raw amino-acid sequence, 239 residues long: 1-(5-phosphoribosyl)-5-[(5-phosphoribosylamino)methylideneamino] imidazole-4-carboxamide isomerase (239 aa).

Asp8 functions as the Proton acceptor in the catalytic mechanism. Asp129 acts as the Proton donor in catalysis.

Belongs to the HisA/HisF family.

Its subcellular location is the cytoplasm. It carries out the reaction 1-(5-phospho-beta-D-ribosyl)-5-[(5-phospho-beta-D-ribosylamino)methylideneamino]imidazole-4-carboxamide = 5-[(5-phospho-1-deoxy-D-ribulos-1-ylimino)methylamino]-1-(5-phospho-beta-D-ribosyl)imidazole-4-carboxamide. It functions in the pathway amino-acid biosynthesis; L-histidine biosynthesis; L-histidine from 5-phospho-alpha-D-ribose 1-diphosphate: step 4/9. This is 1-(5-phosphoribosyl)-5-[(5-phosphoribosylamino)methylideneamino] imidazole-4-carboxamide isomerase from Cereibacter sphaeroides (strain ATCC 17029 / ATH 2.4.9) (Rhodobacter sphaeroides).